The primary structure comprises 310 residues: Calcium homeostasis modulator protein 5 (310 aa).

A run of 4 helical transmembrane segments spans residues 17 to 37 (TIGY…FSMV), 49 to 69 (FPYG…VGFF), 101 to 121 (LIKV…VALL), and 181 to 201 (QILG…GTCY).

This sequence belongs to the CALHM family.

The protein localises to the membrane. Its function is as follows. Pore-forming subunit of a voltage-gated ion channel. In Danio rerio (Zebrafish), this protein is Calcium homeostasis modulator protein 5 (calhm5.1).